We begin with the raw amino-acid sequence, 317 residues long: Ribosomal RNA small subunit methyltransferase H (317 aa).

S-adenosyl-L-methionine-binding positions include 37-39, aspartate 56, phenylalanine 85, aspartate 106, and glutamine 113; that span reads AGH.

The protein belongs to the methyltransferase superfamily. RsmH family.

The protein resides in the cytoplasm. The catalysed reaction is cytidine(1402) in 16S rRNA + S-adenosyl-L-methionine = N(4)-methylcytidine(1402) in 16S rRNA + S-adenosyl-L-homocysteine + H(+). In terms of biological role, specifically methylates the N4 position of cytidine in position 1402 (C1402) of 16S rRNA. This Lactococcus lactis subsp. cremoris (strain SK11) protein is Ribosomal RNA small subunit methyltransferase H.